The chain runs to 94 residues: CRISPR-associated endoribonuclease Cas2 1 (94 aa).

Residue D8 coordinates Mg(2+).

It belongs to the CRISPR-associated endoribonuclease Cas2 protein family. In terms of assembly, homodimer, forms a heterotetramer with a Cas1 homodimer. Mg(2+) is required as a cofactor.

Functionally, CRISPR (clustered regularly interspaced short palindromic repeat), is an adaptive immune system that provides protection against mobile genetic elements (viruses, transposable elements and conjugative plasmids). CRISPR clusters contain sequences complementary to antecedent mobile elements and target invading nucleic acids. CRISPR clusters are transcribed and processed into CRISPR RNA (crRNA). Functions as a ssRNA-specific endoribonuclease. Involved in the integration of spacer DNA into the CRISPR cassette. The protein is CRISPR-associated endoribonuclease Cas2 1 of Synechocystis sp. (strain ATCC 27184 / PCC 6803 / Kazusa).